Reading from the N-terminus, the 179-residue chain is Acireductone dioxygenase (179 aa).

Fe(2+)-binding residues include H85, H87, E91, and H132. Positions 85, 87, 91, and 132 each coordinate Ni(2+).

Belongs to the acireductone dioxygenase (ARD) family. It depends on Fe(2+) as a cofactor. The cofactor is Ni(2+).

The protein resides in the cytoplasm. Its subcellular location is the nucleus. The enzyme catalyses 1,2-dihydroxy-5-(methylsulfanyl)pent-1-en-3-one + O2 = 4-methylsulfanyl-2-oxobutanoate + formate + 2 H(+). It catalyses the reaction 1,2-dihydroxy-5-(methylsulfanyl)pent-1-en-3-one + O2 = 3-(methylsulfanyl)propanoate + CO + formate + 2 H(+). It participates in amino-acid biosynthesis; L-methionine biosynthesis via salvage pathway; L-methionine from S-methyl-5-thio-alpha-D-ribose 1-phosphate: step 5/6. In terms of biological role, catalyzes 2 different reactions between oxygen and the acireductone 1,2-dihydroxy-3-keto-5-methylthiopentene (DHK-MTPene) depending upon the metal bound in the active site. Fe-containing acireductone dioxygenase (Fe-ARD) produces formate and 2-keto-4-methylthiobutyrate (KMTB), the alpha-ketoacid precursor of methionine in the methionine recycle pathway. Ni-containing acireductone dioxygenase (Ni-ARD) produces methylthiopropionate, carbon monoxide and formate, and does not lie on the methionine recycle pathway. The sequence is that of Acireductone dioxygenase from Saccharomyces cerevisiae (strain ATCC 204508 / S288c) (Baker's yeast).